The following is a 309-amino-acid chain: Probable cell division protein kinase ECU11_1290 (309 aa).

In terms of domain architecture, Protein kinase spans 4 to 288 (YENIKQVGEG…VISSHKNTYI (285 aa)). ATP is bound by residues 10-18 (VGEGAFGQV) and Lys33. Residue Asp124 is the Proton acceptor of the active site.

Belongs to the protein kinase superfamily. CMGC Ser/Thr protein kinase family. CDC2/CDKX subfamily.

The protein resides in the nucleus. It catalyses the reaction L-seryl-[protein] + ATP = O-phospho-L-seryl-[protein] + ADP + H(+). The enzyme catalyses L-threonyl-[protein] + ATP = O-phospho-L-threonyl-[protein] + ADP + H(+). Functionally, may play a role in the control of the eukaryotic cell cycle. This chain is Probable cell division protein kinase ECU11_1290, found in Encephalitozoon cuniculi (strain GB-M1) (Microsporidian parasite).